Here is a 2053-residue protein sequence, read N- to C-terminus: MFGGQFGSFGAKPAATASPFGAPSAAPTTSLFGSTAPSSGFGGFGSTAQTTQPTTGGFGGFGGFGGATTTQQPAASPFGGGGTGGSGLFGSSAQTTTQQPGASPFGGGFGTTTTTTTQQPGASPFGGTGGGLFGSSAQTTTQQQGASPFGGFGGATTTQPSLLSGATGGFGGFGGSTTSGTQLGGGGGATSGAFGGSSSPFGGSGGATTSSPFGGGGGSFGATTQKQYGTPIPYQQTTIEGNTFVSISAMPQYNDRSFEELRFEDITHRKDIVYKTGGGSGGGNSLFGSTPTTQPSSPFGAQTTTQTTGGLFGGQTTTSPFGGQTSATPGSSLFGSTQPTQQQTSGGLFGSVQPTQQQAGGGLFGSMPSTGGSSLFGSTQPTQQQTGGAQPTQSLFGGQTQTTTSPFGSQTSTPFGQPQQTNTGSGLFGAQQTQQTNTGGGLFGAQPTQQTSGGGLFGTQPTSGTGLFGTSPTAGGTGLFGTTQPTSQGTGLFGTTQPTTQGTGLFGTSPTSGTGLFGSTPTSGTGLFGSTPTSGTGLFGSAQPPQNQQSQTSLFGNTGTGATNTGTGLFGSAQPSSNPGGGLFGSAQPSTTTGGLFGSNQPTAQPTTSLFGNTTGSVGGLGATPNITSGLFGSNPAQTGGLFGSTQPTTQTSLFGNTGSTGGLGAQNGGGLFGNLSQPTATAGQGLSGGLFGNLSQPTATAGQGLSSGGLFGNTLLGQPSTQGLSSALPTLGLGLMGGQPQQTQQLPQGSLMLQQTQQPLQQQPLQQQQQPLQQSTIQLNNQINSASPYFPISSPAPFATFVKDLTSTSKVVSPPSYTQRSLSHHGYIPKSTTKLVPRRGPNNVDLGFSVIQNQNGLFPIDKFITKHSKSLNINTTNETEDTLRSLNTKSSSLFNNNNNNNNNNNNRNVNTNVNDYQNNGLPSSSLYNSNINQLSNNNNNNNNIYNNNNNNNINNNNNNNNISTQFNLRNNQSSSDNLNNDKSLSSSSSNKSQQQQQKEQKEEQPPKPIKEKEFINPNAPKLTRDGYQCVPSIKELSKKTDKELSSVQGFTISRDGCGSIYFPGSTNLVALDLDDIVDIEPREVSVYKDEETKPEIGYGLNRDAVVTLENCWPKNKNGEVVKEDGTILDKYENALKKVSAKSDCGFVSYSRSNGTWVFTVKHFSKYSAPDFDEDDQQMQQQTQQKQQQTQPSKVTFQQPSTKLTKPKFTANLDNFDSDSETSSGDENQDEMVPQKKTPFIKRVSNRESGLFDTPSVVPMSEKIETTPSKIARVSEPTSQSSRMSNNALKFSTFNPQQQQLQSSRFKSTGLSILSNPVKNLIQSDVNNEQSMFSNTTTTSTTRIQPLPSQQHLVQPIPTTISLNKNYFSKVRIDPQVYDRIVPKEESITNQYRMKNERLNHSTQDVSLFMRRSFRVGWAPGGKLISITKSSFKNLLIKKLPTDTKEDKKESIIKFLKNHHSHSSLVPENLKSIGWFSISNVQEQIESQLTLNVPSSQSVYYNRIWSLISNLWGNVLKGNGSKYINTNYSEDTIRKLNLNQWLKDVIAPLLRDEMDSLRKKTNSNYLEQIFSYLSAKQIKEASDLANENKDFRLATMMSQIWSSSESGKELILKQLTTYHSNGSDEFINEKRLEILHLIAGSVNKIYKNLNDWIRCFAVSFWFKYSLEYSIEDSVENFERSFNAHRSVYPLPPYLIKSTSTNSKQIEEQQHYYDICFLLLKLFAVNRGSSHFDKFKNIFYPENIGQDLLDYHLSWNLYTVLKSIPSLNKQPDLVNASNLHSSFALQLERLGLWQWSIYVLLHTPDQSNHVREEAVKSLIARAAPVITSEDRVFLTTKLHIPEIWIDEAKAWYSGYDCNNDIYDQIDALFKSYQYTKIHDIIFSNIGPNYIIQKRYHSLKDLLIRLEPHSSFISTWRYGGSIFLEFADICIQYKEILSQLSNTAEEIQRTKYYVNLKDITTRIVNILSDISKITQSSEIKNTSASYKQSLSFMSEALITKASLLRDLPESIVKLVSTNNLVSTLNSLPLTQDYRSKNLESLTDQIQDTLLNSIYQ.

5 disordered regions span residues 43 to 222 (GFGS…SFGA), 274 to 617 (YKTG…TTGS), 638 to 662 (QTGGLFGSTQPTTQTSLFGNTGSTG), 890 to 1027 (KSSS…TRDG), and 1170 to 1243 (PDFD…FIKR). The segment covering 46–55 (STAQTTQPTT) has biased composition (low complexity). The span at 56-66 (GGFGGFGGFGG) shows a compositional bias: gly residues. Positions 67–77 (ATTTQQPAASP) are enriched in low complexity. The span at 78-88 (FGGGGTGGSGL) shows a compositional bias: gly residues. Low complexity predominate over residues 111-123 (TTTTTTTQQPGAS). Residues 124 to 133 (PFGGTGGGLF) show a composition bias toward gly residues. Residues 134-147 (GSSAQTTTQQQGAS) show a composition bias toward low complexity. Gly residues predominate over residues 166-195 (ATGGFGGFGGSTTSGTQLGGGGGATSGAFG). A compositionally biased stretch (low complexity) spans 196–212 (GSSSPFGGSGGATTSSP). Residues 276–285 (TGGGSGGGNS) are compositionally biased toward gly residues. Positions 290–299 (TPTTQPSSPF) are enriched in polar residues. Residues 300–318 (GAQTTTQTTGGLFGGQTTT) are compositionally biased toward low complexity. Polar residues predominate over residues 319 to 334 (SPFGGQTSATPGSSLF). The span at 335–346 (GSTQPTQQQTSG) shows a compositional bias: low complexity. Residues 367–378 (MPSTGGSSLFGS) show a composition bias toward polar residues. The span at 379–393 (TQPTQQQTGGAQPTQ) shows a compositional bias: low complexity. Composition is skewed to polar residues over residues 394–425 (SLFGGQTQTTTSPFGSQTSTPFGQPQQTNTGS) and 459–488 (TQPTSGTGLFGTSPTAGGTGLFGTTQPTSQ). Over residues 489 to 508 (GTGLFGTTQPTTQGTGLFGT) the composition is skewed to low complexity. Polar residues-rich tracts occupy residues 509–536 (SPTSGTGLFGSTPTSGTGLFGSTPTSGT) and 543–555 (QPPQNQQSQTSLF). Low complexity predominate over residues 556–567 (GNTGTGATNTGT). Composition is skewed to polar residues over residues 587-616 (AQPSTTTGGLFGSNQPTAQPTTSLFGNTTG) and 638-658 (QTGGLFGSTQPTTQTSLFGNT). Low complexity-rich tracts occupy residues 896–964 (NNNN…NNIS) and 971–998 (NNQSSSDNLNNDKSLSSSSSNKSQQQQQ). Positions 999-1015 (KEQKEEQPPKPIKEKEF) are enriched in basic and acidic residues. Positions 1025-1164 (RDGYQCVPSI…GTWVFTVKHF (140 aa)) constitute a Peptidase S59 domain. Residues 1178 to 1191 (QMQQQTQQKQQQTQ) show a composition bias toward low complexity. The span at 1192–1204 (PSKVTFQQPSTKL) shows a compositional bias: polar residues.

This sequence belongs to the nucleoporin GLFG family. Nup98 interacts directly with Nup96. Post-translationally, autoproteolytically cleaved to yield Nup98 and Nup96 or Nup98 only, respectively.

Its subcellular location is the nucleus. It localises to the nuclear pore complex. The protein resides in the nucleus membrane. In terms of biological role, nup98 and Nup96 play a role in the bidirectional transport across the nucleoporin complex (NPC). The repeat domain in Nup98 has a direct role in the transport. The chain is Nuclear pore complex protein Nup98-Nup96 (nup98) from Dictyostelium discoideum (Social amoeba).